A 190-amino-acid chain; its full sequence is Holliday junction branch migration complex subunit RuvA (190 aa).

The interval 1–65 is domain I; sequence MIGNLSGIVD…ENVAQLYGFI (65 aa). Residues 66–143 are domain II; the sequence is SKEEQQCLRL…KLEINNNNFH (78 aa). A flexible linker region spans residues 144–147; that stretch reads PINE. The segment at 147–190 is domain III; that stretch reads EDALSALINLGYEKMKAYDTIKKYRPNLDTKDIIRMALKELSIL.

The protein belongs to the RuvA family. As to quaternary structure, homotetramer. Forms an RuvA(8)-RuvB(12)-Holliday junction (HJ) complex. HJ DNA is sandwiched between 2 RuvA tetramers; dsDNA enters through RuvA and exits via RuvB. An RuvB hexamer assembles on each DNA strand where it exits the tetramer. Each RuvB hexamer is contacted by two RuvA subunits (via domain III) on 2 adjacent RuvB subunits; this complex drives branch migration. In the full resolvosome a probable DNA-RuvA(4)-RuvB(12)-RuvC(2) complex forms which resolves the HJ.

The protein resides in the cytoplasm. The RuvA-RuvB-RuvC complex processes Holliday junction (HJ) DNA during genetic recombination and DNA repair, while the RuvA-RuvB complex plays an important role in the rescue of blocked DNA replication forks via replication fork reversal (RFR). RuvA specifically binds to HJ cruciform DNA, conferring on it an open structure. The RuvB hexamer acts as an ATP-dependent pump, pulling dsDNA into and through the RuvAB complex. HJ branch migration allows RuvC to scan DNA until it finds its consensus sequence, where it cleaves and resolves the cruciform DNA. The polypeptide is Holliday junction branch migration complex subunit RuvA (Wolbachia pipientis wMel).